Reading from the N-terminus, the 225-residue chain is MKTIKEQLLSSCKPLDELLGGGFESGVVTQIFGEAGSGKTNICLQLAIECVKKGKKAIFIDTEGLSADRFKQIAGENARKIAQDIIIFEPHSFEEQYSAVRETEKISTENVGVIIVDSATAYYRFELDDEDSSIRTRRELSNQIGFLHSLARKRDIVVVITNQVYSDIKSNSLKPIGGSSLEHISKTIIQLEKTGTGSRRAKIWKHRSRPEGTTCEFTITADGVR.

This sequence belongs to the eukaryotic RecA-like protein family. RadB subfamily.

In terms of biological role, involved in DNA repair and in homologous recombination. May regulate the cleavage reactions of the branch-structured DNA. Has a very weak ATPase activity that is not stimulated by DNA. Binds DNA but does not promote DNA strands exchange. In Methanococcoides burtonii (strain DSM 6242 / NBRC 107633 / OCM 468 / ACE-M), this protein is DNA repair and recombination protein RadB.